Consider the following 236-residue polypeptide: 7-cyano-7-deazaguanine synthase (236 aa).

ATP is bound at residue 21 to 31 (LSGGLDSATVL). 4 residues coordinate Zn(2+): Cys202, Cys212, Cys215, and Cys218.

This sequence belongs to the QueC family. Zn(2+) is required as a cofactor.

The catalysed reaction is 7-carboxy-7-deazaguanine + NH4(+) + ATP = 7-cyano-7-deazaguanine + ADP + phosphate + H2O + H(+). It functions in the pathway purine metabolism; 7-cyano-7-deazaguanine biosynthesis. In terms of biological role, catalyzes the ATP-dependent conversion of 7-carboxy-7-deazaguanine (CDG) to 7-cyano-7-deazaguanine (preQ(0)). The sequence is that of 7-cyano-7-deazaguanine synthase from Frankia casuarinae (strain DSM 45818 / CECT 9043 / HFP020203 / CcI3).